A 350-amino-acid chain; its full sequence is Arginine N-succinyltransferase (350 aa).

Succinyl-CoA is bound at residue Leu-125. The active-site Proton donor is the His-229.

This sequence belongs to the arginine N-succinyltransferase family.

The catalysed reaction is succinyl-CoA + L-arginine = N(2)-succinyl-L-arginine + CoA + H(+). The protein operates within amino-acid degradation; L-arginine degradation via AST pathway; L-glutamate and succinate from L-arginine: step 1/5. Functionally, catalyzes the transfer of succinyl-CoA to arginine to produce N(2)-succinylarginine. This is Arginine N-succinyltransferase from Yersinia pseudotuberculosis serotype O:3 (strain YPIII).